Reading from the N-terminus, the 101-residue chain is Large ribosomal subunit protein uL24 (101 aa).

Belongs to the universal ribosomal protein uL24 family. In terms of assembly, part of the 50S ribosomal subunit.

One of two assembly initiator proteins, it binds directly to the 5'-end of the 23S rRNA, where it nucleates assembly of the 50S subunit. Its function is as follows. One of the proteins that surrounds the polypeptide exit tunnel on the outside of the subunit. The protein is Large ribosomal subunit protein uL24 of Streptococcus mutans serotype c (strain ATCC 700610 / UA159).